The sequence spans 394 residues: Phloroisovalerophenone synthase (394 aa).

The active site involves Cys-166.

Belongs to the thiolase-like superfamily. Chalcone/stilbene synthases family. In terms of assembly, homodimer. In terms of tissue distribution, expressed in lupulin gland. Present at low levels in leaves but accumulates in cones.

It catalyses the reaction 3-methylbutanoyl-CoA + 3 malonyl-CoA + 3 H(+) = phlorisovalerophenone + 3 CO2 + 4 CoA. It carries out the reaction (E)-4-coumaroyl-CoA + 3 malonyl-CoA + 3 H(+) = 2',4,4',6'-tetrahydroxychalcone + 3 CO2 + 4 CoA. The enzyme catalyses 2-methylpropanoyl-CoA + 3 malonyl-CoA + 3 H(+) = phlorisobutanophenone + 3 CO2 + 4 CoA. Its pathway is secondary metabolite biosynthesis. In terms of biological role, involved in the biosynthesis of prenylated phenolics natural products which contribute to the bitter taste of beer and display broad biological activities. Polyketide synthase that can use 3-methylbutanoyl-CoA (isovaleryl-CoA) and 2-methylpropanoyl-CoA (isobutyryl-CoA) as substrates to produce phlorisovalerophenone (PIVP) and phlorisobutyrophenone (2-methyl-1-(2,4,6-trihydroxyphenyl)propan-1-one), respectively, intermediates in the biosynthesis of the bitter acids (alpha and beta) acids. Can also produce naringenin-chalcone (2',4,4',6'-tetrahydroxychalcone) from 4-coumaroyl-CoA with a lower efficiency. The protein is Phloroisovalerophenone synthase of Humulus lupulus (European hop).